Consider the following 362-residue polypeptide: Epoxide hydrolase 4 (362 aa).

Residues 17 to 37 form a helical; Signal-anchor for type II membrane protein membrane-spanning segment; the sequence is SLLFWSLVYCYCGLCASIHLL. In terms of domain architecture, AB hydrolase-1 spans 94 to 211; sequence PLMLLLHGFP…EYILRHPAQL (118 aa). The Nucleophile role is filled by Asp169. Tyr281 serves as the catalytic Proton donor. Catalysis depends on His336, which acts as the Proton acceptor.

It belongs to the AB hydrolase superfamily. Epoxide hydrolase family.

It is found in the membrane. This chain is Epoxide hydrolase 4 (EPHX4), found in Homo sapiens (Human).